Here is a 348-residue protein sequence, read N- to C-terminus: Dihydroorotase (348 aa).

The Zn(2+) site is built by His14 and His16. Residues 16–18 (HLR) and Asn42 contribute to the substrate site. Zn(2+)-binding residues include Lys100, His137, and His175. The residue at position 100 (Lys100) is an N6-carboxylysine. Substrate is bound at residue His137. A substrate-binding site is contributed by Leu220. Residue Asp248 participates in Zn(2+) binding. Asp248 is a catalytic residue. Substrate contacts are provided by His252 and Ala264.

This sequence belongs to the metallo-dependent hydrolases superfamily. DHOase family. Class II DHOase subfamily. Homodimer. It depends on Zn(2+) as a cofactor.

The catalysed reaction is (S)-dihydroorotate + H2O = N-carbamoyl-L-aspartate + H(+). Its pathway is pyrimidine metabolism; UMP biosynthesis via de novo pathway; (S)-dihydroorotate from bicarbonate: step 3/3. Its function is as follows. Catalyzes the reversible cyclization of carbamoyl aspartate to dihydroorotate. This Pseudomonas fluorescens (strain ATCC BAA-477 / NRRL B-23932 / Pf-5) protein is Dihydroorotase.